A 628-amino-acid polypeptide reads, in one-letter code: Methionine--tRNA ligase (628 aa).

Residues 9-19 carry the 'HIGH' region motif; the sequence is YYVNDVPHLGH. Zn(2+) contacts are provided by Cys124, Cys127, Cys142, and Cys145. Residues 294-298 carry the 'KMSKS' region motif; the sequence is KMSKS. Lys297 is an ATP binding site. The tRNA-binding domain maps to 527–628; that stretch reads DFAKIEIKVA…QLVQNGSLVG (102 aa).

The protein belongs to the class-I aminoacyl-tRNA synthetase family. MetG type 2A subfamily. As to quaternary structure, homodimer. Requires Zn(2+) as cofactor.

It localises to the cytoplasm. It carries out the reaction tRNA(Met) + L-methionine + ATP = L-methionyl-tRNA(Met) + AMP + diphosphate. Is required not only for elongation of protein synthesis but also for the initiation of all mRNA translation through initiator tRNA(fMet) aminoacylation. This is Methionine--tRNA ligase (metG) from Campylobacter jejuni subsp. jejuni serotype O:2 (strain ATCC 700819 / NCTC 11168).